The sequence spans 201 residues: Orotate phosphoribosyltransferase (201 aa).

Glu113–Ser121 provides a ligand contact to 5-phospho-alpha-D-ribose 1-diphosphate. Thr117 and Arg145 together coordinate orotate.

This sequence belongs to the purine/pyrimidine phosphoribosyltransferase family. PyrE subfamily. As to quaternary structure, homodimer. Mg(2+) is required as a cofactor.

The enzyme catalyses orotidine 5'-phosphate + diphosphate = orotate + 5-phospho-alpha-D-ribose 1-diphosphate. It participates in pyrimidine metabolism; UMP biosynthesis via de novo pathway; UMP from orotate: step 1/2. Its function is as follows. Catalyzes the transfer of a ribosyl phosphate group from 5-phosphoribose 1-diphosphate to orotate, leading to the formation of orotidine monophosphate (OMP). The polypeptide is Orotate phosphoribosyltransferase (Helicobacter pylori (strain HPAG1)).